Reading from the N-terminus, the 355-residue chain is Peptide chain release factor 1 (355 aa).

An N5-methylglutamine modification is found at Gln-229. The segment at 280-299 is disordered; it reads LDRERSAARKGQVGSGDRSE.

This sequence belongs to the prokaryotic/mitochondrial release factor family. In terms of processing, methylated by PrmC. Methylation increases the termination efficiency of RF1.

The protein resides in the cytoplasm. Peptide chain release factor 1 directs the termination of translation in response to the peptide chain termination codons UAG and UAA. The chain is Peptide chain release factor 1 from Parvibaculum lavamentivorans (strain DS-1 / DSM 13023 / NCIMB 13966).